The chain runs to 340 residues: Ketol-acid reductoisomerase (NADP(+)) (340 aa).

The region spanning 3–182 is the KARI N-terminal Rossmann domain; it reads VTMYYEEDVE…GCARVGIIET (180 aa). Residues 26 to 29, R49, S53, and 83 to 86 contribute to the NADP(+) site; these read YGSQ and DELQ. H108 is an active-site residue. G134 lines the NADP(+) pocket. The KARI C-terminal knotted domain maps to 183–328; it reads TFKEETEEDL…AELRKAMPFT (146 aa). Mg(2+) contacts are provided by D191, E195, E227, and E231. S252 serves as a coordination point for substrate.

Belongs to the ketol-acid reductoisomerase family. It depends on Mg(2+) as a cofactor.

It catalyses the reaction (2R)-2,3-dihydroxy-3-methylbutanoate + NADP(+) = (2S)-2-acetolactate + NADPH + H(+). It carries out the reaction (2R,3R)-2,3-dihydroxy-3-methylpentanoate + NADP(+) = (S)-2-ethyl-2-hydroxy-3-oxobutanoate + NADPH + H(+). Its pathway is amino-acid biosynthesis; L-isoleucine biosynthesis; L-isoleucine from 2-oxobutanoate: step 2/4. It participates in amino-acid biosynthesis; L-valine biosynthesis; L-valine from pyruvate: step 2/4. Functionally, involved in the biosynthesis of branched-chain amino acids (BCAA). Catalyzes an alkyl-migration followed by a ketol-acid reduction of (S)-2-acetolactate (S2AL) to yield (R)-2,3-dihydroxy-isovalerate. In the isomerase reaction, S2AL is rearranged via a Mg-dependent methyl migration to produce 3-hydroxy-3-methyl-2-ketobutyrate (HMKB). In the reductase reaction, this 2-ketoacid undergoes a metal-dependent reduction by NADPH to yield (R)-2,3-dihydroxy-isovalerate. In Lactococcus lactis subsp. cremoris (strain SK11), this protein is Ketol-acid reductoisomerase (NADP(+)).